Consider the following 287-residue polypeptide: Gliotoxin thiomethyltransferase GtmA (287 aa).

Positions 27 and 54 each coordinate S-adenosyl-L-methionine. Cys55 and Cys80 are disulfide-bonded. 6 residues coordinate S-adenosyl-L-methionine: Asp82, Met87, Asn109, Ala110, Ala126, and Arg248.

It belongs to the class I-like SAM-binding methyltransferase superfamily.

The protein localises to the cytoplasm. It carries out the reaction a thiol + S-adenosyl-L-methionine = a methyl thioether + S-adenosyl-L-homocysteine + H(+). S-methyltransferase that catalyzes the irreversible conversion of the secondary metabolite gliotoxin to bis(methylthio)gliotoxin (BmGT). Gliotoxin, a member of the epipolythiodioxopiperazine (ETP) class of toxins, is characterized by a disulfide bridged cyclic dipeptide. Its thiol groups are essential for bioactivity, as they conjugate to sulfur-containing proteins, disturb the intracellular redox equilibrium, and generate reactive oxygen species by cycling between reduced and oxidized states. The enzyme prevents self-intoxication of the fungus by irreversible conversion of the toxic gliotoxin to a biologically inactive bis-thiomethylated derivative. Appears to negatively regulate gliotoxin biosynthesis. The protein is Gliotoxin thiomethyltransferase GtmA of Aspergillus fumigatus (strain ATCC MYA-4609 / CBS 101355 / FGSC A1100 / Af293) (Neosartorya fumigata).